Reading from the N-terminus, the 457-residue chain is Argininosuccinate lyase (457 aa).

This sequence belongs to the lyase 1 family. Argininosuccinate lyase subfamily.

It localises to the cytoplasm. The enzyme catalyses 2-(N(omega)-L-arginino)succinate = fumarate + L-arginine. The protein operates within amino-acid biosynthesis; L-arginine biosynthesis; L-arginine from L-ornithine and carbamoyl phosphate: step 3/3. The polypeptide is Argininosuccinate lyase (Citrobacter koseri (strain ATCC BAA-895 / CDC 4225-83 / SGSC4696)).